Here is a 494-residue protein sequence, read N- to C-terminus: Glycosyl hydrolase family 109 protein (494 aa).

Disordered stretches follow at residues 1–35 and 59–86; these read MNDAAPQNPGQDEAKGTGEKDNGGSMSPRSALRTT and EAAQTAVPAAESDESAAPKRQGRTMAGV. Residues 1 to 55 constitute a signal peptide (tat-type signal); the sequence is MNDAAPQNPGQDEAKGTGEKDNGGSMSPRSALRTTAGVAGAGLGLSALGTGTASA. Residues 12–22 are compositionally biased toward basic and acidic residues; it reads DEAKGTGEKDN. NAD(+)-binding positions include 103-104, Asp125, 174-177, 194-195, and Asn223; these read NR, WDFH, and EC. Residues Tyr252, Arg271, 283–286, and Tyr365 each bind substrate; that span reads YPNH. Tyr283 serves as a coordination point for NAD(+). A disordered region spans residues 463–494; that stretch reads KANGKPQQIPDFTRGEWKKSRPGTDSEKPSEP. Positions 475–494 are enriched in basic and acidic residues; sequence TRGEWKKSRPGTDSEKPSEP.

This sequence belongs to the Gfo/Idh/MocA family. Glycosyl hydrolase 109 subfamily. NAD(+) serves as cofactor. Post-translationally, predicted to be exported by the Tat system. The position of the signal peptide cleavage has not been experimentally proven.

Glycosidase. This is Glycosyl hydrolase family 109 protein from Streptomyces niveus (Streptomyces spheroides).